Here is a 126-residue protein sequence, read N- to C-terminus: Small ribosomal subunit protein uS8 (126 aa).

It belongs to the universal ribosomal protein uS8 family. Part of the 30S ribosomal subunit. Contacts proteins S5 and S12.

In terms of biological role, one of the primary rRNA binding proteins, it binds directly to 16S rRNA central domain where it helps coordinate assembly of the platform of the 30S subunit. The chain is Small ribosomal subunit protein uS8 from Nitratidesulfovibrio vulgaris (strain DSM 19637 / Miyazaki F) (Desulfovibrio vulgaris).